A 521-amino-acid polypeptide reads, in one-letter code: Alkyl hydroperoxide reductase subunit F (521 aa).

At Lys53 the chain carries N6-acetyllysine. Asp214–Ile229 serves as a coordination point for FAD. Cys345 and Cys348 are disulfide-bonded. Lys354 bears the N6-acetyllysine mark. Arg357 to Ala371 contacts NAD(+). Position 478–488 (Thr478–Asp488) interacts with FAD.

It belongs to the class-II pyridine nucleotide-disulfide oxidoreductase family. As to quaternary structure, homodimer. FAD serves as cofactor.

Serves to protect the cell against DNA damage by alkyl hydroperoxides. It can use either NADH or NADPH as electron donor for direct reduction of redox dyes or of alkyl hydroperoxides when combined with the AhpC protein. The chain is Alkyl hydroperoxide reductase subunit F (ahpF) from Escherichia coli (strain K12).